The sequence spans 331 residues: FMRFamide-related neuropeptides (331 aa).

An N-terminal signal peptide occupies residues 1–25 (MRCWSPCSLLVVIVIYCLSSHTSEA). Positions 26 to 65 (FDLAQACVESQRLSLLPICDTIFAVQQEGVQQSADDGMRS) are excised as a propeptide. Phenylalanine 71 and phenylalanine 83 each carry phenylalanine amide. Positions 86–94 (NVPDLPFED) are excised as a propeptide. Phenylalanine 100 is modified (phenylalanine amide). A propeptide spanning residues 103 to 168 (AAPQLDELLK…YIDDVEDSDV (66 aa)) is cleaved from the precursor. Residues 122–158 (QKADETSVRRKRSTDAAPQNNAENPEQKNDSAKITKR) form a disordered region. The span at 146–158 (PEQKNDSAKITKR) shows a compositional bias: basic and acidic residues. Phenylalanine amide is present on residues phenylalanine 174 and phenylalanine 181. Positions 184-194 (NPSDVGNKLTE) are excised as a propeptide. Phenylalanine 200 is modified (phenylalanine amide). The propeptide occupies 203-205 (DPE). Phenylalanine 211 bears the Phenylalanine amide mark. Positions 214 to 216 (SDD) are excised as a propeptide. Position 222 is a phenylalanine amide (phenylalanine 222). Positions 225 to 236 (NPSDAEDELEED) are excised as a propeptide. Phenylalanine 242 is subject to Phenylalanine amide. Residues 245–254 (GGEDDEEEAE) constitute a propeptide that is removed on maturation. Phenylalanine amide is present on phenylalanine 260. A propeptide spanning residues 263–265 (DPE) is cleaved from the precursor. Phenylalanine amide is present on phenylalanine 271. A propeptide spanning residues 274–277 (SGED) is cleaved from the precursor. The span at 279 to 296 (RFMRFGRNPDEQEADKRF) shows a compositional bias: basic and acidic residues. The disordered stretch occupies residues 279–310 (RFMRFGRNPDEQEADKRFMRFGRGGEDDEVST). The residue at position 283 (phenylalanine 283) is a Phenylalanine amide. The propeptide occupies 286 to 293 (NPDEQEAD). At phenylalanine 299 the chain carries Phenylalanine amide. Positions 302–312 (GGEDDEVSTED) are excised as a propeptide. The residue at position 318 (phenylalanine 318) is a Phenylalanine amide. Positions 321-331 (SADKCKGCLEG) are excised as a propeptide.

This sequence belongs to the FARP (FMRFamide related peptide) family.

It localises to the secreted. Excitatory neurotransmitters that directly modulate chromatophore function by activating chromatophore expansion at the chromatophore neuromuscular junction. The protein is FMRFamide-related neuropeptides of Doryteuthis opalescens (California market squid).